The chain runs to 421 residues: N-succinylarginine dihydrolase (421 aa).

Substrate is bound by residues 19–28 (AGLSLGNLAS), asparagine 105, and 132–133 (HR). Glutamate 167 is an active-site residue. A substrate-binding site is contributed by arginine 199. Histidine 235 is a catalytic residue. Substrate-binding residues include aspartate 237 and asparagine 346. Cysteine 352 acts as the Nucleophile in catalysis.

This sequence belongs to the succinylarginine dihydrolase family. As to quaternary structure, homodimer.

It carries out the reaction N(2)-succinyl-L-arginine + 2 H2O + 2 H(+) = N(2)-succinyl-L-ornithine + 2 NH4(+) + CO2. Its pathway is amino-acid degradation; L-arginine degradation via AST pathway; L-glutamate and succinate from L-arginine: step 2/5. Catalyzes the hydrolysis of N(2)-succinylarginine into N(2)-succinylornithine, ammonia and CO(2). This chain is N-succinylarginine dihydrolase, found in Novosphingobium aromaticivorans (strain ATCC 700278 / DSM 12444 / CCUG 56034 / CIP 105152 / NBRC 16084 / F199).